Here is a 146-residue protein sequence, read N- to C-terminus: uncharacterized protein (146 aa).

In terms of domain architecture, N-acetyltransferase spans leucine 7–proline 146.

This is an uncharacterized protein from Staphylococcus epidermidis (strain ATCC 12228 / FDA PCI 1200).